Reading from the N-terminus, the 141-residue chain is 16 kDa protein (141 aa).

Residues Ala97–Asp119 are disordered. Residues Lys102–Lys115 are compositionally biased toward basic residues.

The polypeptide is 16 kDa protein (Beta vulgaris (Sugar beet)).